An 806-amino-acid polypeptide reads, in one-letter code: Leucine--tRNA ligase (806 aa).

The 'HIGH' region signature appears at 38 to 48 (PYPSGEIHMGH). The 'KMSKS' region signature appears at 572–576 (KMSKS). Lys575 provides a ligand contact to ATP.

Belongs to the class-I aminoacyl-tRNA synthetase family.

It is found in the cytoplasm. It carries out the reaction tRNA(Leu) + L-leucine + ATP = L-leucyl-tRNA(Leu) + AMP + diphosphate. The protein is Leucine--tRNA ligase of Helicobacter pylori (strain HPAG1).